Consider the following 394-residue polypeptide: Acetate kinase 1 (394 aa).

A Mg(2+)-binding site is contributed by Asn-8. Lys-15 is a binding site for ATP. Arg-90 provides a ligand contact to substrate. Asp-147 (proton donor/acceptor) is an active-site residue. Residues 207-211 (HLGSG) and 282-284 (DMR) contribute to the ATP site. Position 382 (Glu-382) interacts with Mg(2+).

It belongs to the acetokinase family. In terms of assembly, homodimer. Mg(2+) is required as a cofactor. The cofactor is Mn(2+).

Its subcellular location is the cytoplasm. The enzyme catalyses acetate + ATP = acetyl phosphate + ADP. The protein operates within metabolic intermediate biosynthesis; acetyl-CoA biosynthesis; acetyl-CoA from acetate: step 1/2. In terms of biological role, catalyzes the formation of acetyl phosphate from acetate and ATP. Can also catalyze the reverse reaction. The protein is Acetate kinase 1 of Latilactobacillus sakei subsp. sakei (strain 23K) (Lactobacillus sakei subsp. sakei).